A 353-amino-acid polypeptide reads, in one-letter code: Lipase chaperone (353 aa).

The chain crosses the membrane as a helical span at residues 12–32 (IVLYLILGCVVVCGVWYSFDV).

The protein belongs to the lipase chaperone family.

The protein localises to the cell inner membrane. Functionally, may be involved in the folding of the extracellular lipase during its passage through the periplasm. The sequence is that of Lipase chaperone from Xylella fastidiosa (strain M23).